The chain runs to 177 residues: ATP synthase subunit delta (177 aa).

This sequence belongs to the ATPase delta chain family. As to quaternary structure, F-type ATPases have 2 components, F(1) - the catalytic core - and F(0) - the membrane proton channel. F(1) has five subunits: alpha(3), beta(3), gamma(1), delta(1), epsilon(1). F(0) has three main subunits: a(1), b(2) and c(10-14). The alpha and beta chains form an alternating ring which encloses part of the gamma chain. F(1) is attached to F(0) by a central stalk formed by the gamma and epsilon chains, while a peripheral stalk is formed by the delta and b chains.

It localises to the cell inner membrane. Its function is as follows. F(1)F(0) ATP synthase produces ATP from ADP in the presence of a proton or sodium gradient. F-type ATPases consist of two structural domains, F(1) containing the extramembraneous catalytic core and F(0) containing the membrane proton channel, linked together by a central stalk and a peripheral stalk. During catalysis, ATP synthesis in the catalytic domain of F(1) is coupled via a rotary mechanism of the central stalk subunits to proton translocation. In terms of biological role, this protein is part of the stalk that links CF(0) to CF(1). It either transmits conformational changes from CF(0) to CF(1) or is implicated in proton conduction. This chain is ATP synthase subunit delta, found in Shewanella halifaxensis (strain HAW-EB4).